Here is a 775-residue protein sequence, read N- to C-terminus: N6-adenosine-methyltransferase non-catalytic subunit MTB (775 aa).

Residues 1–10 are compositionally biased toward basic and acidic residues; sequence MKKKQEESSL. Disordered stretches follow at residues 1-424 and 520-569; these read MKKK…GAIP and DRGG…EQND. The segment covering 40-49 has biased composition (low complexity); sequence FESSSRSGGS. Basic and acidic residues-rich tracts occupy residues 50–79, 100–117, 125–222, 229–278, and 333–344; these read KSKEDNKSVVDVEHQDRDSKRERDGRERTH, DGDHKSSKLSDSRHDSGG, EHGE…LKDN, SSGD…RGEA, and EWAHNQEGRQRS. Residues 375 to 400 show a composition bias toward polar residues; the sequence is QRGSTPGRTNFVQTPNRGYQTPQGTR.

This sequence belongs to the MT-A70-like family. Forms homodimers. Interacts with HAKAI, MTA and VIR. Associates with MTA, FIP37, VIR and HAKAI to form the m6A writer complex which is essential for adenosine methylation at specific mRNA sequences.

The protein resides in the nucleus speckle. Its subcellular location is the nucleus. The protein localises to the nucleoplasm. Functionally, probable non-catalytic subunit of the N6-methyltransferase complex, a multiprotein complex that mediates N6-methyladenosine (m6A) methylation at the 5'-[AG]GAC-3' consensus sites of some mRNAs. Associates with MTA, FIP37, VIR and HAKAI to form the m6A writer complex which is essential for adenosine methylation at specific mRNA sequences. N6-methyladenosine (m6A) plays a role in mRNA stability, processing, translation efficiency and editing. This chain is N6-adenosine-methyltransferase non-catalytic subunit MTB, found in Arabidopsis thaliana (Mouse-ear cress).